The sequence spans 113 residues: Putative pterin-4-alpha-carbinolamine dehydratase (113 aa).

It belongs to the pterin-4-alpha-carbinolamine dehydratase family.

The enzyme catalyses (4aS,6R)-4a-hydroxy-L-erythro-5,6,7,8-tetrahydrobiopterin = (6R)-L-erythro-6,7-dihydrobiopterin + H2O. This is Putative pterin-4-alpha-carbinolamine dehydratase from Nitrosomonas eutropha (strain DSM 101675 / C91 / Nm57).